Consider the following 247-residue polypeptide: Neurotrophic factor BDNF precursor form (247 aa).

The signal sequence occupies residues 1–18; the sequence is MTILFLTMVISYFGCMKA. The propeptide occupies 19 to 128; that stretch reads APMKEANVRG…AANMSMRVRR (110 aa). The N-linked (GlcNAc...) asparagine glycan is linked to Asn-121. Intrachain disulfides connect Cys-141-Cys-208, Cys-186-Cys-237, and Cys-196-Cys-239.

Belongs to the NGF-beta family. As to quaternary structure, monomers and homodimers. Binds to NTRK2/TRKB. Can form heterodimers with other neurotrophin family members, such as NTF3 and NTF4 (in vitro), but the physiological relevance of this is not clear. BDNF precursor form: interacts with the heterodimer formed by NGFR and SORCS2. Mature BDNF has much lower affinity for the heterodimer formed by NGFR and SORCS2. In terms of processing, N-glycosylated and glycosulfated, contrary to mature BDNF. Mature BDNF is produced by proteolytic removal of the propeptide, catalyzed by a FURIN family member. In addition, the precursor form is proteolytically cleaved within the propeptide, but this is not an obligatory intermediate for the production of mature BDNF. Can be converted into mature BDNF by plasmin (PLG).

Its subcellular location is the secreted. Functionally, important signaling molecule that activates signaling cascades downstream of NTRK2. During development, promotes the survival and differentiation of selected neuronal populations of the peripheral and central nervous systems. Participates in axonal growth, pathfinding and in the modulation of dendritic growth and morphology. Major regulator of synaptic transmission and plasticity at adult synapses in many regions of the CNS. The versatility of BDNF is emphasized by its contribution to a range of adaptive neuronal responses including long-term potentiation (LTP), long-term depression (LTD), certain forms of short-term synaptic plasticity, as well as homeostatic regulation of intrinsic neuronal excitability. Important signaling molecule that activates signaling cascades downstream of NTRK2. Activates signaling cascades via the heterodimeric receptor formed by NGFR and SORCS2. Signaling via NGFR and SORCS2 plays a role in synaptic plasticity and long-term depression (LTD). Binding to NGFR and SORCS2 promotes neuronal apoptosis. Promotes neuronal growth cone collapse. This chain is Neurotrophic factor BDNF precursor form (BDNF), found in Ursus arctos (Brown bear).